The chain runs to 294 residues: Phosphatidylserine decarboxylase proenzyme (294 aa).

Residues Asp-100, His-157, and Ser-261 each act as charge relay system; for autoendoproteolytic cleavage activity in the active site. The Schiff-base intermediate with substrate; via pyruvic acid; for decarboxylase activity role is filled by Ser-261. Ser-261 is modified (pyruvic acid (Ser); by autocatalysis).

It belongs to the phosphatidylserine decarboxylase family. PSD-B subfamily. Prokaryotic type I sub-subfamily. Heterodimer of a large membrane-associated beta subunit and a small pyruvoyl-containing alpha subunit. Pyruvate serves as cofactor. Post-translationally, is synthesized initially as an inactive proenzyme. Formation of the active enzyme involves a self-maturation process in which the active site pyruvoyl group is generated from an internal serine residue via an autocatalytic post-translational modification. Two non-identical subunits are generated from the proenzyme in this reaction, and the pyruvate is formed at the N-terminus of the alpha chain, which is derived from the carboxyl end of the proenzyme. The autoendoproteolytic cleavage occurs by a canonical serine protease mechanism, in which the side chain hydroxyl group of the serine supplies its oxygen atom to form the C-terminus of the beta chain, while the remainder of the serine residue undergoes an oxidative deamination to produce ammonia and the pyruvoyl prosthetic group on the alpha chain. During this reaction, the Ser that is part of the protease active site of the proenzyme becomes the pyruvoyl prosthetic group, which constitutes an essential element of the active site of the mature decarboxylase.

Its subcellular location is the cell membrane. It catalyses the reaction a 1,2-diacyl-sn-glycero-3-phospho-L-serine + H(+) = a 1,2-diacyl-sn-glycero-3-phosphoethanolamine + CO2. Its pathway is phospholipid metabolism; phosphatidylethanolamine biosynthesis; phosphatidylethanolamine from CDP-diacylglycerol: step 2/2. Functionally, catalyzes the formation of phosphatidylethanolamine (PtdEtn) from phosphatidylserine (PtdSer). This Mannheimia succiniciproducens (strain KCTC 0769BP / MBEL55E) protein is Phosphatidylserine decarboxylase proenzyme.